The primary structure comprises 264 residues: 5'-nucleotidase SurE (264 aa).

The a divalent metal cation site is built by aspartate 8, aspartate 9, serine 41, and asparagine 98.

The protein belongs to the SurE nucleotidase family. The cofactor is a divalent metal cation.

The protein resides in the cytoplasm. The catalysed reaction is a ribonucleoside 5'-phosphate + H2O = a ribonucleoside + phosphate. In terms of biological role, nucleotidase that shows phosphatase activity on nucleoside 5'-monophosphates. The chain is 5'-nucleotidase SurE from Carboxydothermus hydrogenoformans (strain ATCC BAA-161 / DSM 6008 / Z-2901).